A 388-amino-acid chain; its full sequence is Chorismate synthase (388 aa).

NADP(+)-binding residues include R39 and R45. FMN contacts are provided by residues 132-134, 251-252, G296, 311-315, and R337; these read RSS, NA, and KPIPT.

Belongs to the chorismate synthase family. Homotetramer. It depends on FMNH2 as a cofactor.

The catalysed reaction is 5-O-(1-carboxyvinyl)-3-phosphoshikimate = chorismate + phosphate. It functions in the pathway metabolic intermediate biosynthesis; chorismate biosynthesis; chorismate from D-erythrose 4-phosphate and phosphoenolpyruvate: step 7/7. Its function is as follows. Catalyzes the anti-1,4-elimination of the C-3 phosphate and the C-6 proR hydrogen from 5-enolpyruvylshikimate-3-phosphate (EPSP) to yield chorismate, which is the branch point compound that serves as the starting substrate for the three terminal pathways of aromatic amino acid biosynthesis. This reaction introduces a second double bond into the aromatic ring system. The chain is Chorismate synthase from Staphylococcus aureus (strain MRSA252).